We begin with the raw amino-acid sequence, 355 residues long: Guanine nucleotide-binding protein G(i) subunit alpha-2 (355 aa).

G2 is lipidated: N-myristoyl glycine. C3 is lipidated: S-palmitoyl cysteine. The 324-residue stretch at 32–355 (REVKLLLLGA…KNNLKDCGLF (324 aa)) folds into the G-alpha domain. The G1 motif stretch occupies residues 35–48 (KLLLLGAGESGKST). GTP contacts are provided by residues 40 to 47 (GAGESGKS), 176 to 182 (LRTRVKT), 201 to 205 (DVGGQ), 270 to 273 (NKKD), and A327. Mg(2+) contacts are provided by S47 and T182. Residues 174–182 (DVLRTRVKT) are G2 motif. Positions 197–206 (FKMFDVGGQR) are G3 motif. The G4 motif stretch occupies residues 266-273 (ILFLNKKD). The G5 motif stretch occupies residues 325 to 330 (TCATDT).

The protein belongs to the G-alpha family. G(i/o/t/z) subfamily. As to quaternary structure, g proteins are composed of 3 units; alpha, beta and gamma. The alpha chain contains the guanine nucleotide binding site. In this context, interacts with GNB2. Interacts with UNC5B. Interacts with GPSM1. Interacts with RGS12 and RGS14. Interacts (inactive GDP-bound form) with NUCB1 (via GBA motif); the interaction leads to activation of GNAI3. Interacts (inactive GDP-bound form) with CCDC88C/DAPLE (via GBA motif). Interacts (inactive GDP-bound form) with CCDC8A/GIV (via GBA motif). Interacts with CXCR1 and CXCR2.

It localises to the cytoplasm. Its subcellular location is the cytoskeleton. It is found in the microtubule organizing center. The protein localises to the centrosome. The protein resides in the cell membrane. It localises to the membrane. In terms of biological role, guanine nucleotide-binding proteins (G proteins) are involved as modulators or transducers in various transmembrane signaling systems. The G(i) proteins are involved in hormonal regulation of adenylate cyclase: they inhibit the cyclase in response to beta-adrenergic stimuli. May play a role in cell division. This is Guanine nucleotide-binding protein G(i) subunit alpha-2 (GNAI2) from Canis lupus familiaris (Dog).